The chain runs to 375 residues: 23S rRNA (uracil(747)-C(5))-methyltransferase RlmC (375 aa).

Residues C3, C11, C14, and C87 each coordinate [4Fe-4S] cluster. The S-adenosyl-L-methionine site is built by Q212, F241, E262, and N307. C334 acts as the Nucleophile in catalysis.

This sequence belongs to the class I-like SAM-binding methyltransferase superfamily. RNA M5U methyltransferase family. RlmC subfamily.

It carries out the reaction uridine(747) in 23S rRNA + S-adenosyl-L-methionine = 5-methyluridine(747) in 23S rRNA + S-adenosyl-L-homocysteine + H(+). In terms of biological role, catalyzes the formation of 5-methyl-uridine at position 747 (m5U747) in 23S rRNA. The polypeptide is 23S rRNA (uracil(747)-C(5))-methyltransferase RlmC (Vibrio cholerae serotype O1 (strain ATCC 39541 / Classical Ogawa 395 / O395)).